Reading from the N-terminus, the 305-residue chain is N-acetylmuramic acid 6-phosphate etherase (305 aa).

The region spanning 54-217 is the SIS domain; the sequence is AVPQLERGGR…SSALMVRLGK (164 aa). The active-site Proton donor is the glutamate 82. Residue glutamate 113 is part of the active site.

It belongs to the GCKR-like family. MurNAc-6-P etherase subfamily. In terms of assembly, homodimer.

It catalyses the reaction N-acetyl-D-muramate 6-phosphate + H2O = N-acetyl-D-glucosamine 6-phosphate + (R)-lactate. The protein operates within amino-sugar metabolism; N-acetylmuramate degradation. In terms of biological role, specifically catalyzes the cleavage of the D-lactyl ether substituent of MurNAc 6-phosphate, producing GlcNAc 6-phosphate and D-lactate. This chain is N-acetylmuramic acid 6-phosphate etherase, found in Deinococcus radiodurans (strain ATCC 13939 / DSM 20539 / JCM 16871 / CCUG 27074 / LMG 4051 / NBRC 15346 / NCIMB 9279 / VKM B-1422 / R1).